Reading from the N-terminus, the 116-residue chain is Heme-degrading monooxygenase (116 aa).

The region spanning 2-92 (VIVTNTSKIT…EYILENKISF (91 aa)) is the ABM domain. Asn6 is a Fe cation binding site. His76 serves as a coordination point for heme.

The protein belongs to the antibiotic biosynthesis monooxygenase family. Heme-degrading monooxygenase IsdG subfamily. In terms of assembly, homodimer.

It is found in the cytoplasm. The catalysed reaction is heme b + 3 reduced [NADPH--hemoprotein reductase] + 3 O2 = biliverdin IXalpha + CO + Fe(2+) + 3 oxidized [NADPH--hemoprotein reductase] + 3 H2O + H(+). In terms of biological role, allows bacterial pathogens to use the host heme as an iron source. Catalyzes the oxidative degradation of the heme macrocyclic porphyrin ring to the biliverdin in the presence of a suitable electron donor such as ascorbate or NADPH--cytochrome P450 reductase, with subsequent release of free iron. In Halalkalibacterium halodurans (strain ATCC BAA-125 / DSM 18197 / FERM 7344 / JCM 9153 / C-125) (Bacillus halodurans), this protein is Heme-degrading monooxygenase.